The sequence spans 1146 residues: Ankyrin repeat and fibronectin type-III domain-containing protein 1 (1146 aa).

ANK repeat units lie at residues 133–162 (QGNE…PEEL) and 170–199 (EGLT…RESP). A Fibronectin type-III domain is found at 270-366 (MPTNVCLMVT…TTTPACASPS (97 aa)). A highly conserved peptide sequence region spans residues 607 to 614 (GLYLGYLK). Disordered regions lie at residues 855-887 (NSTS…QPCS), 945-964 (VKTP…NPDH), and 1106-1146 (PWAS…SSML). Over residues 1131-1146 (EGPTASPMSEILSSML) the composition is skewed to polar residues.

Its function is as follows. May play a role in neuronal function. This Homo sapiens (Human) protein is Ankyrin repeat and fibronectin type-III domain-containing protein 1.